A 243-amino-acid chain; its full sequence is Peptide deformylase, mitochondrial (243 aa).

The N-terminal 39 residues, 1-39, are a transit peptide targeting the mitochondrion; that stretch reads MARLWGALSLWPLWAAVPWGGAAAVGVRACSSTAAPDGV. Substrate-binding residues include Gly-71, Pro-169, and Gly-171. Positions 165-175 are hydrophobic dimerization interface; that stretch reads LVTFPEGCESV. Co(2+)-binding residues include Cys-172 and His-214. Residue Glu-215 is part of the active site. Position 218 (His-218) interacts with Co(2+).

Belongs to the polypeptide deformylase family. In terms of assembly, homodimer. The cofactor is Co(2+). In terms of tissue distribution, ubiquitous.

Its subcellular location is the mitochondrion. The catalysed reaction is N-terminal N-formyl-L-methionyl-[peptide] + H2O = N-terminal L-methionyl-[peptide] + formate. Functionally, removes the formyl group from the N-terminal Met of newly synthesized proteins. This is Peptide deformylase, mitochondrial from Homo sapiens (Human).